Here is a 513-residue protein sequence, read N- to C-terminus: Solute carrier family 2, facilitated glucose transporter member 10 (513 aa).

The Cytoplasmic portion of the chain corresponds to 1–6 (MGCSVL). Residues 7–27 (LLTITVSTLGGLVFGYELGII) traverse the membrane as a helical segment. At 28-46 (SGALPQLQTHFSLGCVQQE) the chain is on the extracellular side. A helical transmembrane segment spans residues 47 to 67 (AVVSALLIGSLFASIIGGWLI). Topologically, residues 68 to 80 (DRHGRRTSILLSN) are cytoplasmic. Residues 81–101 (LLILAGSVILTTGTSFFALVI) traverse the membrane as a helical segment. The Extracellular segment spans residues 102–104 (GRA). The chain crosses the membrane as a helical span at residues 105–125 (VIGFAMTVSSMSCCIFVSEMV). Residues 126-130 (TPERR) lie on the Cytoplasmic side of the membrane. The helical transmembrane segment at 131-151 (GLMVTLYEVGITVGILIAYAV) threads the bilayer. The Extracellular portion of the chain corresponds to 152–164 (NYIFNNVPLTGWR). Residues 165–185 (YMFGFAIIPSLIQLASIVLLP) traverse the membrane as a helical segment. Residues 186–236 (KQAEVFVIHDDDSRQADRLTEETETSNQHQQSEKYGVSDLFKSKDNMRRRT) are Cytoplasmic-facing. Residues 237–257 (VIGVGLVLSQQFTGQPNVLFY) traverse the membrane as a helical segment. 246–247 (QQ) provides a ligand contact to D-glucose. Residues 258–272 (ASTILFSVGFQSNAS) lie on the Extracellular side of the membrane. Asparagine 270 is a glycosylation site (N-linked (GlcNAc...) asparagine). The chain crosses the membrane as a helical span at residues 273 to 293 (AILASVGFGIVKVIATLLAML). The Cytoplasmic segment spans residues 294–301 (CSDRAGRR). The helical transmembrane segment at 302-322 (SLLIGGCSMLAVGLILTGFLC) threads the bilayer. At 323 to 376 (RQSVIDTTKRCTSVGPHSNLTLSAEHDEGVGFSSQTLDVHEHLRSFSQSEDIYK) the chain is on the extracellular side. Asparagine 341 carries N-linked (GlcNAc...) asparagine glycosylation. A helical membrane pass occupies residues 377–397 (WIIFTCLMAVVSAFSVSFGPM). Topologically, residues 398–422 (TWVVLSEIFPKDIRGRAFSFINCFN) are cytoplasmic. Tryptophan 399 contacts D-glucose. Transmembrane regions (helical) follow at residues 423–443 (VGANLIVSFSFLSIIDVIGLS) and 444–464 (GVFLMYGVVGIAGVVFIYLVL). Residues 465–513 (PETKGKSLQDIDRELSQTRMIHRQELCSIFQRRRFSPGYQRVQLTSTAT) are Cytoplasmic-facing.

It belongs to the major facilitator superfamily. Sugar transporter (TC 2.A.1.1) family. Glucose transporter subfamily.

Its subcellular location is the endomembrane system. The protein localises to the cytoplasm. It localises to the perinuclear region. The enzyme catalyses D-glucose(out) = D-glucose(in). Functionally, facilitative glucose transporter required for the development of the cardiovascular system. This chain is Solute carrier family 2, facilitated glucose transporter member 10, found in Danio rerio (Zebrafish).